Consider the following 570-residue polypeptide: Glucan 1,3-beta-glucosidase 2 (570 aa).

Residues Asn-91, Asn-116, Asn-121, Asn-184, Asn-203, and Asn-248 are each glycosylated (N-linked (GlcNAc...) asparagine). The active-site Proton donor is the Glu-338. An N-linked (GlcNAc...) asparagine glycan is attached at Asn-364. The active-site Nucleophile is the Glu-439. Residues Asn-525 and Asn-552 are each glycosylated (N-linked (GlcNAc...) asparagine).

The protein belongs to the glycosyl hydrolase 5 (cellulase A) family.

It localises to the secreted. The enzyme catalyses Successive hydrolysis of beta-D-glucose units from the non-reducing ends of (1-&gt;3)-beta-D-glucans, releasing alpha-glucose.. In Schizosaccharomyces pombe (strain 972 / ATCC 24843) (Fission yeast), this protein is Glucan 1,3-beta-glucosidase 2 (exg2).